A 517-amino-acid chain; its full sequence is FAD-dependent monooxygenase dmxR9 (517 aa).

Positions 96 and 162 each coordinate FAD. Residues Arg-243 and Tyr-270 contribute to the active site. FAD is bound by residues Asp-365 and Ala-378.

This sequence belongs to the paxM FAD-dependent monooxygenase family. It depends on FAD as a cofactor.

It functions in the pathway secondary metabolite biosynthesis. FAD-dependent monooxygenase; part of the gene cluster that mediates the biosynthesis of the dimeric xanthones cryptosporioptides. The pathway begins with the synthesis of atrochrysone thioester by the polyketide synthase dmx-nrPKS. The atrochrysone carboxyl ACP thioesterase dmxR1 then breaks the thioester bond and releases the atrochrysone carboxylic acid from dmx-nrPKS. Atrochrysone carboxylic acid is decarboxylated by the decarboxylase dmxR15, and oxidized by the anthrone oxygenase dmxR16 to yield emodin. Emodin is then reduced to emodin hydroquinone by the oxidoreductase dmxR7. A-ring reduction by the short chain dehydrogenase dmxR18, dehydration by the scytalone dehydratase-like protein dmxR17 and probable spontaneous re-oxidation, results in overall deoxygenation to chrysophanol. Baeyer-Villiger oxidation by the Baeyer-Villiger monooxygenase (BVMO) dmxR6 then yields monodictylactone in equilibrium with monodictyphenone. In the case of the cryptosporioptides biosynthesis, monodictylactone is reduced at C-12 to an alcohol (by the short chain dehydrogenases dmxR12 or dmxR8) and hydroxylated at C-5 by dmxR9, yielding the electron-rich aromatic which could eliminate H(2)O to form the ortho-quinonemethide, followed by tautomerisation to paraquinone and complete the formal reduction to produce the 10-methylgroup. Conjugate addition of C-4a-OH to the resulting paraquinone by the monooxygenase dmxR10 then gives cyclohexadienone, which is then reduced at C-5 by the short chain dehydrogenase dmxR3 to give the dihydroxanthone. The 6,7-epoxide in the cryptosporioptides could be introduced by the cytochrome P450 monooxygenase dmxL3. The highly reducing PKS dmxL2 manufactures butyrate, which is further carboxylated by dmxL1 to form ethylmalonate. It is not yet clear whether the carboxylation occurs while the butyrate is attached to the ACP of dmxL2, but this unusual fungal metabolite could then be esterified to O-5 by the O-acetyltransferase dmxR13. Finally, dimerization performed by dmxR5 gives the observed dimers cryptosporioptides A, B and C as the final products of the pathway. This Cryptosporiopsis sp. (strain 8999) protein is FAD-dependent monooxygenase dmxR9.